Consider the following 289-residue polypeptide: Homeobox protein engrailed-2 (289 aa).

2 stretches are compositionally biased toward basic and acidic residues: residues 1–12 and 60–83; these read MEEGGRSPREEA and EFGR…ESRR. 2 disordered regions span residues 1–166 and 179–206; these read MEEG…GNQP and SDRP…PRTA. Gly residues predominate over residues 96–114; sequence VPGGGGGGGGGSPGRGEGG. Positions 142-160 are enriched in low complexity; that stretch reads LSGAELSVSSDSDSSQAGS. The homeobox DNA-binding region spans 200 to 259; sequence DKRPRTAFTAEQLQRLKAEFQTNRYLTEQRRQSLAQELGLNESQIKIWFQNKRAKIKKAT.

This sequence belongs to the engrailed homeobox family.

It is found in the nucleus. This chain is Homeobox protein engrailed-2 (EN2), found in Gallus gallus (Chicken).